A 165-amino-acid polypeptide reads, in one-letter code: LIM domain transcription factor LMO4.2 (165 aa).

LIM zinc-binding domains lie at 21–83 (KRCA…LFGN) and 85–147 (GACS…ALIN).

Acts as a positive cofactor of GATA transcription factors to establish the identity of the ventral mesoderm during gastrulation. Down-regulation in the dorsal mesoderm is necessary for the proper formation of this territory since, when present, lmo4 may bind ldb1 and restrict the availability of this cofactor for Spemman organizer transcription factors. At neurula stages, suppresses primary neuron differentiation and modulates gene expression at the Isthmic Organizer of the midbrain-hindbrain boundary. The chain is LIM domain transcription factor LMO4.2 (lmo4.2) from Xenopus tropicalis (Western clawed frog).